Here is a 597-residue protein sequence, read N- to C-terminus: Proteasome-associated ATPase (597 aa).

Residues 1–12 (MQHDRPGSRPEE) are compositionally biased toward basic and acidic residues. The tract at residues 1–22 (MQHDRPGSRPEEGGEQQIGGDA) is disordered. The stretch at 21 to 97 (DAELNSQIRL…REEVDRLAQP (77 aa)) forms a coiled coil. 284–289 (GCGKTL) provides a ligand contact to ATP. The interval 596–597 (YL) is docks into pockets in the proteasome alpha-ring.

This sequence belongs to the AAA ATPase family. As to quaternary structure, homohexamer. Assembles into a hexameric ring structure that caps the 20S proteasome core. Strongly interacts with the prokaryotic ubiquitin-like protein Pup through a hydrophobic interface; the interacting region of ARC lies in its N-terminal coiled-coil domain. There is one Pup binding site per ARC hexamer ring. Upon ATP-binding, the C-terminus of ARC interacts with the alpha-rings of the proteasome core, possibly by binding to the intersubunit pockets.

The protein operates within protein degradation; proteasomal Pup-dependent pathway. Functionally, ATPase which is responsible for recognizing, binding, unfolding and translocation of pupylated proteins into the bacterial 20S proteasome core particle. May be essential for opening the gate of the 20S proteasome via an interaction with its C-terminus, thereby allowing substrate entry and access to the site of proteolysis. Thus, the C-termini of the proteasomal ATPase may function like a 'key in a lock' to induce gate opening and therefore regulate proteolysis. This Saccharopolyspora erythraea (strain ATCC 11635 / DSM 40517 / JCM 4748 / NBRC 13426 / NCIMB 8594 / NRRL 2338) protein is Proteasome-associated ATPase.